The following is a 1693-amino-acid chain: Non-structural polyprotein pORF1 (1693 aa).

The region spanning 56–240 (VFRPEVFWNH…HDVSNLRSWI (185 aa)) is the Alphavirus-like MT domain. The interval 241–439 (RTTKVTGDHP…FYAQCRRWLS (199 aa)) is Y-domain. A disulfide bridge links Cys434 with Cys481. The protease stretch occupies residues 442 to 509 (FHLDPRVLVF…EAYEGSDVDP (68 aa)). The tract at residues 510–691 (AESAISDISG…FSPGHVWESA (182 aa)) is zinc-binding. Residues His671, Glu673, and His686 each contribute to the Zn(2+) site. Residues 712–770 (SSPAQPDLGFISEPSIPSRAATLTPAAPLPPPAPDPSPTPSAPARGEPAPGATARAPAI) are hinge. The interval 732–768 (ATLTPAAPLPPPAPDPSPTPSAPARGEPAPGATARAP) is disordered. The segment covering 738 to 752 (APLPPPAPDPSPTPS) has biased composition (pro residues). The Macro domain occupies 775 to 921 (ARHRRLLFTY…LYLPELAARW (147 aa)). In terms of domain architecture, (+)RNA virus helicase ATP-binding spans 934 to 1082 (ITEDVARTAN…RPDLAPTSWW (149 aa)). The NTPase/helicase stretch occupies residues 960 to 1204 (GCRVTPGVVQ…ISDAIVNNFF (245 aa)). 975-982 (GVPGSGKS) provides a ligand contact to ATP. Residues 1083 to 1216 (HVTHRCPADV…GGEIGHQRPS (134 aa)) enclose the (+)RNA virus helicase C-terminal domain. Residues 1207-1693 (GGEIGHQRPS…LTNSILCRVE (487 aa)) form an RNA-directed RNA polymerase region. The RdRp catalytic domain maps to 1454–1565 (SMVFENDFSE…LCSEYRQSPG (112 aa)).

Belongs to the hepevirus non-structural polyprotein family. In terms of assembly, the protease domain interacts with host EIF2AK4 (via C-terminus); this interaction inhibits dimerization of EIF2AK4 and prevents EIF2AK4-mediated phosphorylation of host EIF2A. It depends on Mg(2+) as a cofactor. Post-translationally, ORF1 polyprotein does not seem to be processed into distinct enzymatic domains by a viral protease belonging to ORF1, but could be processed by a host serine protease like thrombin.

The protein localises to the host cytoplasm. The protein resides in the host perinuclear region. It catalyses the reaction GTP + S-adenosyl-L-methionine = N(7)-methyl-GTP + S-adenosyl-L-homocysteine. The enzyme catalyses RNA(n) + a ribonucleoside 5'-triphosphate = RNA(n+1) + diphosphate. Its activity is regulated as follows. Putative protease: Inhibited by chymostatin. Methyltransferase: Displays a capping enzyme activity. This function is necessary since all viral RNAs are synthesized in the cytoplasm, and host capping enzymes are restricted to the nucleus. The enzymatic reaction involves a covalent link between 7-methyl-GMP and the methyltransferase, whereas eukaryotic capping enzymes form a covalent complex only with GMP. Methyltransferase catalyzes transfer of a methyl group from S-adenosylmethionine to GTP and GDP to yield m(7)GTP or m(7)GDP. GDP is a better substrate than GTP. This enzyme also displays guanylyltransferase activity to form a covalent complex, methyltransferase-m(7)GMP, from which 7-methyl-GMP is transferred to the mRNA to create the cap structure. In terms of biological role, Y-domain: Indispensable for virus replication. Functionally, putative protease: The putative protease domain, although necessary for replication of the virus, may not be a protease but rather a structural Zn(2+)-binding domain. Inhibits induction of IFN-beta by MDA5 and RIG-I pathways and down-regulates the expression of MDA5. Its function is as follows. NTPase/helicase: Multi-functional protein that exhibits NTPase and RNA unwinding activities. Hydrolyzes all NTPs efficiently and unwinds RNA duplexes containing 5' overhangs. Possesses a sequence independent RNA-5'-triphosphatase (RTPase) activity suggestive of its role in forming viral cap structure. Also participates in viral genome replication, RNA translocation and genome packaging/unpackaging. RNA-directed RNA polymerase: Plays an essential role in the virus replication. Binds to the 3'-end of the genomic RNA to initiate viral replication. The sequence is that of Non-structural polyprotein pORF1 from Homo sapiens (Human).